We begin with the raw amino-acid sequence, 193 residues long: Peptidyl-tRNA hydrolase (193 aa).

Residue Tyr16 participates in tRNA binding. Catalysis depends on His21, which acts as the Proton acceptor. Residues Tyr66, Asn68, and Asn114 each contribute to the tRNA site.

It belongs to the PTH family. As to quaternary structure, monomer.

The protein resides in the cytoplasm. It carries out the reaction an N-acyl-L-alpha-aminoacyl-tRNA + H2O = an N-acyl-L-amino acid + a tRNA + H(+). Its function is as follows. Hydrolyzes ribosome-free peptidyl-tRNAs (with 1 or more amino acids incorporated), which drop off the ribosome during protein synthesis, or as a result of ribosome stalling. Catalyzes the release of premature peptidyl moieties from peptidyl-tRNA molecules trapped in stalled 50S ribosomal subunits, and thus maintains levels of free tRNAs and 50S ribosomes. This Geobacter sulfurreducens (strain ATCC 51573 / DSM 12127 / PCA) protein is Peptidyl-tRNA hydrolase.